The primary structure comprises 643 residues: Alpha-dioxygenase 1 (643 aa).

H167 functions as the Proton acceptor in the catalytic mechanism. D168 contributes to the Ca(2+) binding site. Position 172 (H172) interacts with heme b. Ca(2+) contacts are provided by T220, W222, D224, and S226. Heme b-binding residues include H392, R489, and R493.

It belongs to the peroxidase family. The cofactor is heme b. Ca(2+) is required as a cofactor.

Functionally, alpha-dioxygenase that catalyzes the primary oxygenation step of a variety of 14-20 carbon fatty acids, containing up to three unsaturated bonds, into their corresponding 2R-hydroperoxides. Involved in the production of oxylipins that function in cell signaling, wound healing, and protection from infection. The lipid-derived signaling pathway is involved in the initial response of hot pepper plants to pathogen infection. The polypeptide is Alpha-dioxygenase 1 (Capsicum annuum (Capsicum pepper)).